The chain runs to 455 residues: UDP-N-acetylmuramoyl-tripeptide--D-alanyl-D-alanine ligase (455 aa).

Position 107–113 (107–113 (GSCGKTS)) interacts with ATP.

This sequence belongs to the MurCDEF family. MurF subfamily.

The protein localises to the cytoplasm. The catalysed reaction is D-alanyl-D-alanine + UDP-N-acetyl-alpha-D-muramoyl-L-alanyl-gamma-D-glutamyl-meso-2,6-diaminopimelate + ATP = UDP-N-acetyl-alpha-D-muramoyl-L-alanyl-gamma-D-glutamyl-meso-2,6-diaminopimeloyl-D-alanyl-D-alanine + ADP + phosphate + H(+). The protein operates within cell wall biogenesis; peptidoglycan biosynthesis. Functionally, involved in cell wall formation. Catalyzes the final step in the synthesis of UDP-N-acetylmuramoyl-pentapeptide, the precursor of murein. In Buchnera aphidicola subsp. Acyrthosiphon pisum (strain APS) (Acyrthosiphon pisum symbiotic bacterium), this protein is UDP-N-acetylmuramoyl-tripeptide--D-alanyl-D-alanine ligase.